We begin with the raw amino-acid sequence, 527 residues long: Cytochrome P450 monooygenase 3 (527 aa).

Residues 21-41 (IAVAFAALCGATGLLAFSWWI) form a helical membrane-spanning segment. Residue cysteine 473 coordinates heme.

It belongs to the cytochrome P450 family. The cofactor is heme.

It is found in the membrane. Its pathway is plant hormone biosynthesis; gibberellin biosynthesis. In terms of biological role, gibberellin 13-hydroxylase; part of the gene cluster that mediates the biosynthesis of gibberellins (GAs), diterpenoids that may provide a selective advantage during infection of the preferred host plant, rice. Gibberellins (GAs) are diterpenoids and are synthesized via the mevalonate pathway. Biosynthesis of the major metabolite GA3 (gibberellic acid) from geranylgeranyl diphosphate (GGPP) requires 13 steps. The GGPP produced by the geranylgeranyl diphosphate synthase GGS2 is converted to ent-kaurene via ent-copalyldiphosphate in a two-step cyclization reaction performed by the bifunctional ent-copalyl diphosphate synthase/ent-kaurene synthase enzyme (CPS/KS). Ent-Kaurene is metabolized to GAs by a series of oxidation reactions catalyzed by cytochrome P450 monooxygenases. Cytochrome P450 monooxygenase P450-4 is an ent-kaurene oxidase that catalyzes the three oxidation steps between ent-kaurene and ent-kaurenoic acid. The highly multifunctional cytochrome P450 monooxygenase P450-1 then catalyzes four steps involving oxidation at two carbon atoms, in the main pathway from ent-kaurenoic acid to GA14 via GA12-aldehyde as well as producing kaurenolides and fujenoic acids as by-products. The cytochrome P450 monooxygenase P450-2 then converts GA14 to GA4 by removal of C-20. GA4 is further converted to GA7 by the GA4 desaturase DES via 1,2-desaturation before cytochrome P450 monooxygenase P450-3, a 13-hydroxylase, hydroxylates GA7 to GA3, the final product of the GA-biosynthetic pathway. The polypeptide is Cytochrome P450 monooygenase 3 (Gibberella fujikuroi (strain CBS 195.34 / IMI 58289 / NRRL A-6831) (Bakanae and foot rot disease fungus)).